The sequence spans 264 residues: Thymidylate synthase (264 aa).

Position 21 (Arg-21) interacts with dUMP. His-51 provides a ligand contact to (6R)-5,10-methylene-5,6,7,8-tetrahydrofolate. DUMP is bound at residue 126-127 (RR). Catalysis depends on Cys-146, which acts as the Nucleophile. DUMP is bound by residues 166–169 (RSAD), Asn-177, and 207–209 (HLY). Asp-169 contacts (6R)-5,10-methylene-5,6,7,8-tetrahydrofolate. Residue Ala-263 coordinates (6R)-5,10-methylene-5,6,7,8-tetrahydrofolate.

Belongs to the thymidylate synthase family. Bacterial-type ThyA subfamily. In terms of assembly, homodimer.

The protein localises to the cytoplasm. The enzyme catalyses dUMP + (6R)-5,10-methylene-5,6,7,8-tetrahydrofolate = 7,8-dihydrofolate + dTMP. Its pathway is pyrimidine metabolism; dTTP biosynthesis. Functionally, catalyzes the reductive methylation of 2'-deoxyuridine-5'-monophosphate (dUMP) to 2'-deoxythymidine-5'-monophosphate (dTMP) while utilizing 5,10-methylenetetrahydrofolate (mTHF) as the methyl donor and reductant in the reaction, yielding dihydrofolate (DHF) as a by-product. This enzymatic reaction provides an intracellular de novo source of dTMP, an essential precursor for DNA biosynthesis. The polypeptide is Thymidylate synthase (Bdellovibrio bacteriovorus (strain ATCC 15356 / DSM 50701 / NCIMB 9529 / HD100)).